Consider the following 301-residue polypeptide: 2-phosphoglycerate kinase (301 aa).

Residues 2–89 enclose the ATP-cone domain; the sequence is IRVIEKGDKV…FWRRFRKMKV (88 aa).

Belongs to the 2-phosphoglycerate kinase family. A divalent metal cation serves as cofactor.

The enzyme catalyses (2R)-2-phosphoglycerate + ATP = (2R)-2,3-bisphosphoglycerate + ADP + H(+). It participates in thermoadapter biosynthesis; cyclic 2,3-diphosphoglycerate biosynthesis; cyclic 2,3-diphosphoglycerate from 2-phospho-D-glycerate: step 1/2. Catalyzes the phosphorylation of 2-phosphoglycerate to 2,3-diphosphoglycerate. Involved in the biosynthesis of cyclic 2,3-bisphosphoglycerate, a thermoprotectant. The chain is 2-phosphoglycerate kinase from Pyrococcus horikoshii (strain ATCC 700860 / DSM 12428 / JCM 9974 / NBRC 100139 / OT-3).